The sequence spans 648 residues: Bifunctional protein TilS/HprT (648 aa).

29–34 contributes to the ATP binding site; that stretch reads SGGPDS. Mg(2+) is bound at residue Asp627.

It in the N-terminal section; belongs to the tRNA(Ile)-lysidine synthase family. In the C-terminal section; belongs to the purine/pyrimidine phosphoribosyltransferase family. The cofactor is Mg(2+).

It is found in the cytoplasm. It carries out the reaction IMP + diphosphate = hypoxanthine + 5-phospho-alpha-D-ribose 1-diphosphate. The catalysed reaction is GMP + diphosphate = guanine + 5-phospho-alpha-D-ribose 1-diphosphate. The enzyme catalyses cytidine(34) in tRNA(Ile2) + L-lysine + ATP = lysidine(34) in tRNA(Ile2) + AMP + diphosphate + H(+). Ligates lysine onto the cytidine present at position 34 of the AUA codon-specific tRNA(Ile) that contains the anticodon CAU, in an ATP-dependent manner. Cytidine is converted to lysidine, thus changing the amino acid specificity of the tRNA from methionine to isoleucine. In Listeria innocua serovar 6a (strain ATCC BAA-680 / CLIP 11262), this protein is Bifunctional protein TilS/HprT (tilS/hprT).